Here is a 341-residue protein sequence, read N- to C-terminus: UPF0284 protein Ta0078 (341 aa).

It belongs to the UPF0284 family.

The sequence is that of UPF0284 protein Ta0078 from Thermoplasma acidophilum (strain ATCC 25905 / DSM 1728 / JCM 9062 / NBRC 15155 / AMRC-C165).